The following is a 128-amino-acid chain: Large ribosomal subunit protein bL17 (128 aa).

It belongs to the bacterial ribosomal protein bL17 family. Part of the 50S ribosomal subunit. Contacts protein L32.

This chain is Large ribosomal subunit protein bL17, found in Streptococcus pneumoniae serotype 2 (strain D39 / NCTC 7466).